The primary structure comprises 100 residues: Large ribosomal subunit protein uL23 (100 aa).

Belongs to the universal ribosomal protein uL23 family. Part of the 50S ribosomal subunit. Contacts protein L29, and trigger factor when it is bound to the ribosome.

In terms of biological role, one of the early assembly proteins it binds 23S rRNA. One of the proteins that surrounds the polypeptide exit tunnel on the outside of the ribosome. Forms the main docking site for trigger factor binding to the ribosome. This Mycolicibacterium smegmatis (strain ATCC 700084 / mc(2)155) (Mycobacterium smegmatis) protein is Large ribosomal subunit protein uL23.